Here is a 195-residue protein sequence, read N- to C-terminus: Adenylate kinase (195 aa).

8–16 serves as a coordination point for ATP; sequence GIPGVGKTT.

It belongs to the archaeal adenylate kinase family. As to quaternary structure, homotrimer.

It localises to the cytoplasm. It catalyses the reaction AMP + ATP = 2 ADP. The chain is Adenylate kinase (adkA) from Saccharolobus solfataricus (strain ATCC 35092 / DSM 1617 / JCM 11322 / P2) (Sulfolobus solfataricus).